We begin with the raw amino-acid sequence, 623 residues long: MEFQEALKYIPSNSICSNPNYKLIWKKIQQYSYEVNSSSSLILSDISSSSYDLSGIFEKSLMIFLMIENFTTQYSNQSYLYRFLNEPPINNNNNNTKSEFQQIITDPSNKESLKSLLQFSKTINISKIFENNTQPIIISPPQQSQQPPPPTSGNNFFSILSSNINTINNNSNNNNNNNNCKSYKKQQTSKGSATASTNTTTDIYDEQQMKLQQLQQQYYQQQLNELQQINQQISQKVNLLQQTTPTTTNTSTTATTTTIPPSPSNTTTTTTNNNNNNIPQQTSISTASTSIKIISEDGVSNNKRKRRPRAPAPFLDSLYCHSCGETQTSQWRRGPDGCKSLCNACGIRFANIVSKEKALAVKEKNISINMLLNESSNQQQQQQQQQQQQQIIQQQQIIQQQQQKDDHLPLSRPSSFSSQSNSQQDDSLPLSRPSSFSSQSSSSSSSFLSSLLSSSSPPIPSTTTTTTTTTTTTSPTISSESLNFSSATNTPTNLSPNLQSINHNDKLINNNNNNNTALEGFPPTFNINNYNNNNNIDKLSSSKDSTENNGYNYYSSYNNYNISEYVPSPAYQNSRMTNVGIGSFKRKLSNEDQLNGLSAIVTASEQLFFGISNDVNQGSNVKL.

3 disordered regions span residues 137–156, 167–197, and 245–289; these read IISP…GNNF, INNN…TAST, and PTTT…TAST. The segment covering 167–179 has biased composition (low complexity); the sequence is INNNSNNNNNNNN. Over residues 185 to 197 the composition is skewed to polar residues; that stretch reads KQQTSKGSATAST. The GATA-type zinc-finger motif lies at 320-345; the sequence is CHSCGETQTSQWRRGPDGCKSLCNAC. Residues 398–509 form a disordered region; that stretch reads IQQQQQKDDH…SINHNDKLIN (112 aa). The segment covering 410-482 has biased composition (low complexity); the sequence is LSRPSSFSSQ…TSPTISSESL (73 aa). Over residues 483-502 the composition is skewed to polar residues; that stretch reads NFSSATNTPTNLSPNLQSIN.

The protein is GATA zinc finger domain-containing protein 6 (gtaF) of Dictyostelium discoideum (Social amoeba).